The sequence spans 408 residues: UPF0754 membrane protein Tery_3973 (408 aa).

2 consecutive transmembrane segments (helical) span residues 4 to 24 (IWLY…TNDI) and 385 to 405 (IVNL…ILLV).

The protein belongs to the UPF0754 family.

Its subcellular location is the cell inner membrane. The protein is UPF0754 membrane protein Tery_3973 of Trichodesmium erythraeum (strain IMS101).